An 860-amino-acid chain; its full sequence is Leucine--tRNA ligase (860 aa).

The short motif at 42-52 (PYPSGRLHMGH) is the 'HIGH' region element. Residues 619-623 (KMSKS) carry the 'KMSKS' region motif. Residue Lys-622 participates in ATP binding.

It belongs to the class-I aminoacyl-tRNA synthetase family.

The protein localises to the cytoplasm. The catalysed reaction is tRNA(Leu) + L-leucine + ATP = L-leucyl-tRNA(Leu) + AMP + diphosphate. The polypeptide is Leucine--tRNA ligase (Salmonella choleraesuis (strain SC-B67)).